The following is a 679-amino-acid chain: Transketolase (679 aa).

Histidine 30 lines the substrate pocket. Residues histidine 69 and 116–118 (GPL) contribute to the thiamine diphosphate site. A Mg(2+)-binding site is contributed by aspartate 157. Thiamine diphosphate contacts are provided by glycine 158 and asparagine 187. Residues asparagine 187 and isoleucine 189 each contribute to the Mg(2+) site. Substrate contacts are provided by histidine 262, arginine 358, and serine 385. Residue histidine 262 coordinates thiamine diphosphate. The thiamine diphosphate site is built by glutamate 417 and phenylalanine 444. Glutamate 417 functions as the Proton donor in the catalytic mechanism. The substrate site is built by histidine 468, aspartate 476, and arginine 527.

The protein belongs to the transketolase family. In terms of assembly, homodimer. Mg(2+) serves as cofactor. The cofactor is Ca(2+). Mn(2+) is required as a cofactor. Requires Co(2+) as cofactor. It depends on thiamine diphosphate as a cofactor.

It carries out the reaction D-sedoheptulose 7-phosphate + D-glyceraldehyde 3-phosphate = aldehydo-D-ribose 5-phosphate + D-xylulose 5-phosphate. In terms of biological role, catalyzes the transfer of a two-carbon ketol group from a ketose donor to an aldose acceptor, via a covalent intermediate with the cofactor thiamine pyrophosphate. This is Transketolase (TKL1) from Kluyveromyces lactis (strain ATCC 8585 / CBS 2359 / DSM 70799 / NBRC 1267 / NRRL Y-1140 / WM37) (Yeast).